A 681-amino-acid polypeptide reads, in one-letter code: DNA ligase (681 aa).

NAD(+) contacts are provided by residues 35–39 (DAEYD), 84–85 (SI), and Glu121. Lys123 serves as the catalytic N6-AMP-lysine intermediate. Positions 144, 180, 300, and 324 each coordinate NAD(+). Zn(2+) contacts are provided by Cys418, Cys421, Cys436, and Cys442. A BRCT domain is found at 601 to 681 (AADGPASGKT…GLRRLLEQPA (81 aa)).

Belongs to the NAD-dependent DNA ligase family. LigA subfamily. Requires Mg(2+) as cofactor. Mn(2+) serves as cofactor.

It carries out the reaction NAD(+) + (deoxyribonucleotide)n-3'-hydroxyl + 5'-phospho-(deoxyribonucleotide)m = (deoxyribonucleotide)n+m + AMP + beta-nicotinamide D-nucleotide.. Its function is as follows. DNA ligase that catalyzes the formation of phosphodiester linkages between 5'-phosphoryl and 3'-hydroxyl groups in double-stranded DNA using NAD as a coenzyme and as the energy source for the reaction. It is essential for DNA replication and repair of damaged DNA. This is DNA ligase from Aromatoleum aromaticum (strain DSM 19018 / LMG 30748 / EbN1) (Azoarcus sp. (strain EbN1)).